We begin with the raw amino-acid sequence, 633 residues long: DNA repair protein XRCC1 (633 aa).

Position 140 is a phosphoserine (serine 140). Lysine 176 participates in a covalent cross-link: Glycyl lysine isopeptide (Lys-Gly) (interchain with G-Cter in SUMO1); alternate. A Glycyl lysine isopeptide (Lys-Gly) (interchain with G-Cter in SUMO2); alternate cross-link involves residue lysine 176. Phosphothreonine is present on threonine 198. A Phosphoserine modification is found at serine 199. The residue at position 202 (threonine 202) is a Phosphothreonine. Serine 204, serine 226, and serine 241 each carry phosphoserine. The segment covering 221–231 (AASSASPVSRA) has biased composition (low complexity). Residues 221–313 (AASSASPVSR…TEPRRPRAGP (93 aa)) form a disordered region. A compositionally biased stretch (basic and acidic residues) spans 240-257 (ESPKGKRKLDLNQEEKKT). Threonine 257 carries the post-translational modification Phosphothreonine. Residues serine 259 and serine 266 each carry the phosphoserine modification. The span at 277–291 (APTRTPATAPVPARA) shows a compositional bias: low complexity. Phosphothreonine is present on threonine 281. The segment covering 299–313 (PRGEGTEPRRPRAGP) has biased composition (basic and acidic residues). The BRCT 1 domain maps to 315 to 403 (ELGKILQGVV…RRLPSQRYLM (89 aa)). Residue serine 371 is modified to Phosphoserine; by PRKDC. 3 disordered regions span residues 400–462 (RYLM…AASP), 471–490 (EGVQ…DTED), and 498–536 (QKEH…DLPV). Residues serine 408, serine 409, serine 410, and serine 421 each carry the phosphoserine modification. Residues 427–443 (KLPQKQPQTKTKPTQAA) are compositionally biased toward low complexity. A phosphoserine mark is found at serine 446 and serine 447. Residues threonine 453 and threonine 457 each carry the phosphothreonine modification. 2 positions are modified to phosphoserine: serine 461 and serine 485. Acidic residues predominate over residues 481-490 (GAEDSGDTED). Threonine 488 is modified (phosphothreonine). The residue at position 518 (serine 518) is a Phosphoserine. Phosphothreonine is present on residues threonine 519 and threonine 523. A BRCT 2 domain is found at 538-629 (ELPDFFQGKH…KLLPHQLYGV (92 aa)).

Homodimer. Interacts with polynucleotide kinase (PNK), DNA polymerase-beta (POLB) and DNA ligase III (LIG3). Interacts with APTX and APLF. Interacts with APEX1; the interaction is induced by SIRT1 and increases with the acetylated form of APEX1. Interacts with (poly-ADP-ribosylated) PARP1. Phosphorylation of Ser-371 causes dimer dissociation. Phosphorylation by CK2 promotes interaction with APTX and APLF. Post-translationally, sumoylated. Expressed in fibroblasts, retinal pigmented epithelial cells and lymphoblastoid cells (at protein level).

Its subcellular location is the nucleus. It localises to the chromosome. Functionally, scaffold protein involved in DNA single-strand break repair by mediating the assembly of DNA break repair protein complexes. Negatively regulates ADP-ribosyltransferase activity of PARP1 during base-excision repair in order to prevent excessive PARP1 activity. Recognizes and binds poly-ADP-ribose chains: specifically binds auto-poly-ADP-ribosylated PARP1, limiting its activity. This chain is DNA repair protein XRCC1, found in Homo sapiens (Human).